A 75-amino-acid chain; its full sequence is Kappa-scoloptoxin(03)-Ssm1e (75 aa).

The first 23 residues, 1-23 (MKSSMAILLVMALIIFTLDKNYS), serve as a signal peptide directing secretion.

Belongs to the scoloptoxin-03 family. In terms of processing, contains 3 disulfide bonds. Expressed by the venom gland.

The protein resides in the secreted. Inhibits voltage-gated potassium channels. This is Kappa-scoloptoxin(03)-Ssm1e from Scolopendra mutilans (Chinese red-headed centipede).